A 160-amino-acid chain; its full sequence is Probable NADH dehydrogenase [ubiquinone] 1 beta subcomplex subunit 2, mitochondrial (160 aa).

The protein belongs to the complex I NDUFB2 subunit family. Complex I is composed of 45 different subunits.

The protein resides in the mitochondrion inner membrane. Its function is as follows. Accessory subunit of the mitochondrial membrane respiratory chain NADH dehydrogenase (Complex I), that is believed not to be involved in catalysis. Complex I functions in the transfer of electrons from NADH to the respiratory chain. The immediate electron acceptor for the enzyme is believed to be ubiquinone. This chain is Probable NADH dehydrogenase [ubiquinone] 1 beta subcomplex subunit 2, mitochondrial, found in Caenorhabditis elegans.